The following is a 159-amino-acid chain: 2-C-methyl-D-erythritol 2,4-cyclodiphosphate synthase (159 aa).

Residues Asp9 and His11 each coordinate a divalent metal cation. 4-CDP-2-C-methyl-D-erythritol 2-phosphate-binding positions include 9-11 (DVH) and 35-36 (HS). A divalent metal cation is bound at residue His43. 4-CDP-2-C-methyl-D-erythritol 2-phosphate is bound by residues 57–59 (DIG), 62–66 (FPDTD), 133–136 (TTTE), Phe140, and Arg143.

The protein belongs to the IspF family. Homotrimer. It depends on a divalent metal cation as a cofactor.

It catalyses the reaction 4-CDP-2-C-methyl-D-erythritol 2-phosphate = 2-C-methyl-D-erythritol 2,4-cyclic diphosphate + CMP. It functions in the pathway isoprenoid biosynthesis; isopentenyl diphosphate biosynthesis via DXP pathway; isopentenyl diphosphate from 1-deoxy-D-xylulose 5-phosphate: step 4/6. In terms of biological role, involved in the biosynthesis of isopentenyl diphosphate (IPP) and dimethylallyl diphosphate (DMAPP), two major building blocks of isoprenoid compounds. Catalyzes the conversion of 4-diphosphocytidyl-2-C-methyl-D-erythritol 2-phosphate (CDP-ME2P) to 2-C-methyl-D-erythritol 2,4-cyclodiphosphate (ME-CPP) with a corresponding release of cytidine 5-monophosphate (CMP). This is 2-C-methyl-D-erythritol 2,4-cyclodiphosphate synthase from Mannheimia succiniciproducens (strain KCTC 0769BP / MBEL55E).